The primary structure comprises 197 residues: Ribosome maturation factor RimM (197 aa).

The PRC barrel domain occupies glutamate 99–leucine 174.

Belongs to the RimM family. In terms of assembly, binds ribosomal protein uS19.

Its subcellular location is the cytoplasm. An accessory protein needed during the final step in the assembly of 30S ribosomal subunit, possibly for assembly of the head region. Essential for efficient processing of 16S rRNA. May be needed both before and after RbfA during the maturation of 16S rRNA. It has affinity for free ribosomal 30S subunits but not for 70S ribosomes. In Bartonella quintana (strain Toulouse) (Rochalimaea quintana), this protein is Ribosome maturation factor RimM.